Here is a 124-residue protein sequence, read N- to C-terminus: Small ribosomal subunit protein uS13 (124 aa).

The interval 94–124 (RGLPVRGQRTKTNARTRKGPKRTIAGKKKAR) is disordered.

This sequence belongs to the universal ribosomal protein uS13 family. Part of the 30S ribosomal subunit. Forms a loose heterodimer with protein S19. Forms two bridges to the 50S subunit in the 70S ribosome.

Located at the top of the head of the 30S subunit, it contacts several helices of the 16S rRNA. In the 70S ribosome it contacts the 23S rRNA (bridge B1a) and protein L5 of the 50S subunit (bridge B1b), connecting the 2 subunits; these bridges are implicated in subunit movement. Contacts the tRNAs in the A and P-sites. In Mycolicibacterium vanbaalenii (strain DSM 7251 / JCM 13017 / BCRC 16820 / KCTC 9966 / NRRL B-24157 / PYR-1) (Mycobacterium vanbaalenii), this protein is Small ribosomal subunit protein uS13.